A 190-amino-acid chain; its full sequence is Xanthine phosphoribosyltransferase (190 aa).

Residues L20 and N27 each contribute to the xanthine site. Residue 129-133 (ASGSA) participates in 5-phospho-alpha-D-ribose 1-diphosphate binding. K157 is a xanthine binding site.

The protein belongs to the purine/pyrimidine phosphoribosyltransferase family. Xpt subfamily. In terms of assembly, homodimer.

It is found in the cytoplasm. It catalyses the reaction XMP + diphosphate = xanthine + 5-phospho-alpha-D-ribose 1-diphosphate. Its pathway is purine metabolism; XMP biosynthesis via salvage pathway; XMP from xanthine: step 1/1. Converts the preformed base xanthine, a product of nucleic acid breakdown, to xanthosine 5'-monophosphate (XMP), so it can be reused for RNA or DNA synthesis. This is Xanthine phosphoribosyltransferase from Clostridium tetani (strain Massachusetts / E88).